Consider the following 874-residue polypeptide: Alanine--tRNA ligase (874 aa).

Zn(2+) contacts are provided by histidine 564, histidine 568, cysteine 665, and histidine 669.

The protein belongs to the class-II aminoacyl-tRNA synthetase family. Zn(2+) serves as cofactor.

It localises to the cytoplasm. It catalyses the reaction tRNA(Ala) + L-alanine + ATP = L-alanyl-tRNA(Ala) + AMP + diphosphate. In terms of biological role, catalyzes the attachment of alanine to tRNA(Ala) in a two-step reaction: alanine is first activated by ATP to form Ala-AMP and then transferred to the acceptor end of tRNA(Ala). Also edits incorrectly charged Ser-tRNA(Ala) and Gly-tRNA(Ala) via its editing domain. This chain is Alanine--tRNA ligase, found in Burkholderia cenocepacia (strain HI2424).